The following is a 272-amino-acid chain: Imidazole glycerol phosphate synthase subunit HisF (272 aa).

Catalysis depends on residues Asp11 and Asp130.

The protein belongs to the HisA/HisF family. Heterodimer of HisH and HisF.

It localises to the cytoplasm. The catalysed reaction is 5-[(5-phospho-1-deoxy-D-ribulos-1-ylimino)methylamino]-1-(5-phospho-beta-D-ribosyl)imidazole-4-carboxamide + L-glutamine = D-erythro-1-(imidazol-4-yl)glycerol 3-phosphate + 5-amino-1-(5-phospho-beta-D-ribosyl)imidazole-4-carboxamide + L-glutamate + H(+). It functions in the pathway amino-acid biosynthesis; L-histidine biosynthesis; L-histidine from 5-phospho-alpha-D-ribose 1-diphosphate: step 5/9. IGPS catalyzes the conversion of PRFAR and glutamine to IGP, AICAR and glutamate. The HisF subunit catalyzes the cyclization activity that produces IGP and AICAR from PRFAR using the ammonia provided by the HisH subunit. This is Imidazole glycerol phosphate synthase subunit HisF from Methanococcus maripaludis (strain C7 / ATCC BAA-1331).